The sequence spans 162 residues: Peptide deformylase-like (162 aa).

This sequence belongs to the polypeptide deformylase family.

This chain is Peptide deformylase-like, found in Staphylococcus epidermidis (strain ATCC 35984 / DSM 28319 / BCRC 17069 / CCUG 31568 / BM 3577 / RP62A).